A 156-amino-acid chain; its full sequence is Probable cyclic pyranopterin monophosphate synthase (156 aa).

Substrate-binding positions include 74–76 (MCH) and 110–111 (ME). The active site involves D125.

It belongs to the MoaC family. As to quaternary structure, homohexamer; trimer of dimers.

It carries out the reaction (8S)-3',8-cyclo-7,8-dihydroguanosine 5'-triphosphate = cyclic pyranopterin phosphate + diphosphate. It participates in cofactor biosynthesis; molybdopterin biosynthesis. Its function is as follows. Catalyzes the conversion of (8S)-3',8-cyclo-7,8-dihydroguanosine 5'-triphosphate to cyclic pyranopterin monophosphate (cPMP). The protein is Probable cyclic pyranopterin monophosphate synthase of Methanospirillum hungatei JF-1 (strain ATCC 27890 / DSM 864 / NBRC 100397 / JF-1).